A 437-amino-acid polypeptide reads, in one-letter code: Beta-1,3-galactosyl-O-glycosyl-glycoprotein beta-1,6-N-acetylglucosaminyltransferase 3 (437 aa).

At 1 to 6 the chain is on the cytoplasmic side; sequence MVSWRR. Residues 7 to 27 traverse the membrane as a helical; Signal-anchor for type II membrane protein segment; sequence FCWHYHGWTLGCYMLLAIIAL. Residues 28–437 lie on the Lumenal side of the membrane; sequence KLSLRLKCDF…RHKAIYGTEL (410 aa). Cystine bridges form between Cys-70–Cys-227, Cys-161–Cys-381, Cys-182–Cys-209, and Cys-390–Cys-422. The N-linked (GlcNAc...) asparagine glycan is linked to Asn-288.

The protein belongs to the glycosyltransferase 14 family. N-glycosylated.

The protein localises to the golgi apparatus membrane. It catalyses the reaction a 3-O-[beta-D-galactosyl-(1-&gt;3)-N-acetyl-alpha-D-galactosaminyl]-L-seryl-[protein] + UDP-N-acetyl-alpha-D-glucosamine = 3-O-{beta-D-galactosyl-(1-&gt;3)-[N-acetyl-beta-D-glucosaminyl-(1-&gt;6)]-N-acetyl-alpha-D-galactosaminyl}-L-seryl-[protein] + UDP + H(+). It carries out the reaction a 3-O-[beta-D-galactosyl-(1-&gt;3)-N-acetyl-alpha-D-galactosaminyl]-L-threonyl-[protein] + UDP-N-acetyl-alpha-D-glucosamine = a 3-O-{beta-D-galactosyl-(1-&gt;3)-[N-acetyl-beta-D-glucosaminyl-(1-&gt;6)]-N-acetyl-alpha-D-galactosaminyl}-L-threonyl-[protein] + UDP + H(+). The catalysed reaction is a beta-D-Gal-(1-&gt;4)-beta-D-GlcNAc-(1-&gt;3)-beta-D-Gal-(1-&gt;4)-beta-D-GlcNAc derivative + UDP-N-acetyl-alpha-D-glucosamine = a beta-D-Gal-(1-&gt;4)-beta-D-GlcNAc-(1-&gt;3)-[beta-D-GlcNAc-(1-&gt;6)]-beta-D-Gal-(1-&gt;4)-N-acetyl-beta-D-glucosaminyl derivative + UDP + H(+). The enzyme catalyses 3-O-[N-acetyl-beta-D-glucosaminyl-(1-&gt;3)-N-acetyl-alpha-D-galactosaminyl]-L-seryl-[protein] + UDP-N-acetyl-alpha-D-glucosamine = 3-O-[N-acetyl-beta-D-glucosaminyl-(1-&gt;3)-[N-acetyl-beta-D-glucosaminyl-(1-&gt;6)]-N-acetyl-alpha-D-galactosaminyl]-L-seryl-[protein] + UDP + H(+). It catalyses the reaction a 3-O-[N-acetyl-beta-D-glucosaminyl-(1-&gt;3)-N-acetyl-alpha-D-galactosaminyl]-L-threonyl-[protein] + UDP-N-acetyl-alpha-D-glucosamine = 3-O-[N-acetyl-beta-D-glucosaminyl-(1-&gt;3)-[N-acetyl-beta-D-glucosaminyl-(1-&gt;6)]-N-acetyl-alpha-D-galactosaminyl]-L-threonyl-[protein] + UDP + H(+). It participates in protein modification; protein glycosylation. In terms of biological role, glycosyltransferase that can synthesize all known mucin beta 6 N-acetylglucosaminides. Mediates core 2 and core 4 O-glycan branching, 2 important steps in mucin-type biosynthesis. Also has I-branching enzyme activity by converting linear into branched poly-N-acetyllactosaminoglycans, leading to introduce the blood group I antigen during embryonic development. The chain is Beta-1,3-galactosyl-O-glycosyl-glycoprotein beta-1,6-N-acetylglucosaminyltransferase 3 (Gcnt3) from Rattus norvegicus (Rat).